Here is a 502-residue protein sequence, read N- to C-terminus: Glutamate dehydrogenase, mitochondrial (502 aa).

96 to 98 (HHR) contributes to the NAD(+) binding site. 2 residues coordinate substrate: lysine 102 and lysine 126. An NAD(+)-binding site is contributed by aspartate 131. The active site involves lysine 138. Position 394 (serine 394) interacts with substrate.

Belongs to the Glu/Leu/Phe/Val dehydrogenases family. In terms of assembly, homohexamer.

It is found in the mitochondrion matrix. It carries out the reaction L-glutamate + NAD(+) + H2O = 2-oxoglutarate + NH4(+) + NADH + H(+). The catalysed reaction is L-glutamate + NADP(+) + H2O = 2-oxoglutarate + NH4(+) + NADPH + H(+). Subject to allosteric regulation. Activated by AMP and ADP. The chain is Glutamate dehydrogenase, mitochondrial (gluD) from Dictyostelium discoideum (Social amoeba).